We begin with the raw amino-acid sequence, 538 residues long: Fructooligosaccharide ABC transporter substrate-binding protein FusA (538 aa).

The N-terminal stretch at 1-22 (MKFKTFSKSAVLLTASLAVLAA) is a signal peptide. Cysteine 23 carries N-palmitoyl cysteine lipidation. Cysteine 23 carries S-diacylglycerol cysteine lipidation. Residue glutamate 167 participates in substrate binding. Ca(2+) is bound by residues aspartate 215, asparagine 217, asparagine 219, glutamate 221, aspartate 223, and glutamate 224. Asparagine 235 lines the substrate pocket. Ca(2+) contacts are provided by aspartate 263, phenylalanine 264, aspartate 267, and asparagine 268. Positions 314, 318, 353, 384, 419, and 423 each coordinate substrate.

It belongs to the bacterial solute-binding protein 1 family. In terms of assembly, the complex is composed of two ATP-binding proteins (MsmK), two transmembrane proteins (FusB and FusC) and a solute-binding protein (FusA).

It localises to the cell membrane. In terms of biological role, part of the ABC transporter complex FusABC-MsmK involved in short- and long-chain fructooligosaccharide (FOS) import. Required for the utilization of long-chain FOSs. Binds kestose, nystose, fructofuranosyl-nystose and inulin, but not sucrose. Has a preference for long-chain FOSs (tetrasaccharides and larger). This chain is Fructooligosaccharide ABC transporter substrate-binding protein FusA, found in Streptococcus pneumoniae serotype 4 (strain ATCC BAA-334 / TIGR4).